Consider the following 220-residue polypeptide: Histone H1B (220 aa).

2 disordered regions span residues 1-45 and 99-220; these read MTAT…PSAS and QVKG…APKK. A compositionally biased stretch (low complexity) spans 28 to 45; the sequence is KKVAGGAKAKKPSGPSAS. One can recognise an H15 domain in the interval 40 to 113; sequence SGPSASELIV…GASGSFKLNK (74 aa). Basic residues-rich tracts occupy residues 122 to 134, 141 to 151, 158 to 196, and 204 to 220; these read AAKK…KAKK, KAPKSPKKPKK, SPKK…KPKT, and KVAK…APKK.

Belongs to the histone H1/H5 family.

It is found in the nucleus. Its subcellular location is the chromosome. In terms of biological role, histones H1 are necessary for the condensation of nucleosome chains into higher-order structures. The polypeptide is Histone H1B (Xenopus laevis (African clawed frog)).